A 113-amino-acid chain; its full sequence is Large ribosomal subunit protein bL17 (113 aa).

It belongs to the bacterial ribosomal protein bL17 family. In terms of assembly, part of the 50S ribosomal subunit. Contacts protein L32.

The polypeptide is Large ribosomal subunit protein bL17 (Symbiobacterium thermophilum (strain DSM 24528 / JCM 14929 / IAM 14863 / T)).